We begin with the raw amino-acid sequence, 218 residues long: Cytochrome b6 (218 aa).

A helical transmembrane segment spans residues 35–55 (IFYCLGGITLVCFLVQFATGF). Residue cysteine 38 coordinates heme c. Residues histidine 89 and histidine 103 each coordinate heme b. The next 3 helical transmembrane spans lie at 93-113 (ASMM…TGGF), 119-139 (LTWV…VTGY), and 189-209 (LHTF…FLMI). Residues histidine 190 and histidine 205 each contribute to the heme b site.

This sequence belongs to the cytochrome b family. PetB subfamily. As to quaternary structure, the 4 large subunits of the cytochrome b6-f complex are cytochrome b6, subunit IV (17 kDa polypeptide, PetD), cytochrome f and the Rieske protein, while the 4 small subunits are PetG, PetL, PetM and PetN. The complex functions as a dimer. Heme b is required as a cofactor. Heme c serves as cofactor.

The protein resides in the cellular thylakoid membrane. In terms of biological role, component of the cytochrome b6-f complex, which mediates electron transfer between photosystem II (PSII) and photosystem I (PSI), cyclic electron flow around PSI, and state transitions. The polypeptide is Cytochrome b6 (Prochlorococcus marinus (strain MIT 9303)).